A 385-amino-acid chain; its full sequence is Glucans biosynthesis protein C (385 aa).

10 helical membrane passes run 17–37 (AWLM…SHTW), 60–80 (MQVF…RYPL), 91–111 (VGIP…IMLQ), 137–157 (ISHL…VWIF), 173–193 (KFSM…YAVI), 212–232 (FIVM…LAFI), 239–259 (LFTT…VAYL), 274–294 (TESV…FSFG), 311–331 (ASLF…AYIT), and 338–358 (WLGF…LYEI).

This sequence belongs to the acyltransferase 3 family. OpgC subfamily.

Its subcellular location is the cell membrane. It functions in the pathway glycan metabolism; osmoregulated periplasmic glucan (OPG) biosynthesis. Necessary for the succinyl substitution of periplasmic glucans. Could catalyze the transfer of succinyl residues from the cytoplasmic side of the membrane to the nascent glucan backbones on the periplasmic side of the membrane. The protein is Glucans biosynthesis protein C of Escherichia coli (strain SMS-3-5 / SECEC).